The following is a 281-amino-acid chain: Diaminopimelate epimerase (281 aa).

N13, Q46, and N66 together coordinate substrate. Catalysis depends on C75, which acts as the Proton donor. Substrate-binding positions include 76–77, N160, N193, and 211–212; these read GN and ER. The active-site Proton acceptor is the C220. 221-222 provides a ligand contact to substrate; the sequence is GT.

The protein belongs to the diaminopimelate epimerase family. In terms of assembly, homodimer.

The protein resides in the cytoplasm. It catalyses the reaction (2S,6S)-2,6-diaminopimelate = meso-2,6-diaminopimelate. Its pathway is amino-acid biosynthesis; L-lysine biosynthesis via DAP pathway; DL-2,6-diaminopimelate from LL-2,6-diaminopimelate: step 1/1. Its function is as follows. Catalyzes the stereoinversion of LL-2,6-diaminopimelate (L,L-DAP) to meso-diaminopimelate (meso-DAP), a precursor of L-lysine and an essential component of the bacterial peptidoglycan. In Acinetobacter baylyi (strain ATCC 33305 / BD413 / ADP1), this protein is Diaminopimelate epimerase.